The sequence spans 155 residues: uncharacterized protein (155 aa).

Residues 7-154 (LQINYKTLEE…VWLPESVELQ (148 aa)) form the N-acetyltransferase domain.

This is an uncharacterized protein from Brevibacillus brevis (strain 47 / JCM 6285 / NBRC 100599).